The primary structure comprises 582 residues: Membrane protein insertase YidC (582 aa).

Residues 3 to 23 (IQRALVITGIAVVSYLMIQAW) form a helical membrane-spanning segment. The tract at residues 38-92 (QVAEQGNSSSSDSADLPSVQSQTDNSIPSAQSDNDLPSVSPADIAQPTPSSQRIE) is disordered. Positions 45–58 (SSSSDSADLPSVQS) are enriched in low complexity. A compositionally biased stretch (polar residues) spans 59–74 (QTDNSIPSAQSDNDLP). 5 consecutive transmembrane segments (helical) span residues 357-377 (TVDYGWLWFISQPIFALLVFL), 394-414 (GVGNWGVAIILLTLIIKAIFF), 464-484 (LGGCLPMLVQMPVFIALYYVL), 495-515 (FFLWINDLSVMDPYFVLPILM), and 541-561 (MPMIFAVFMLWFPAGLVLYWL).

It belongs to the OXA1/ALB3/YidC family. Type 1 subfamily. In terms of assembly, interacts with the Sec translocase complex via SecD. Specifically interacts with transmembrane segments of nascent integral membrane proteins during membrane integration.

Its subcellular location is the cell inner membrane. In terms of biological role, required for the insertion and/or proper folding and/or complex formation of integral membrane proteins into the membrane. Involved in integration of membrane proteins that insert both dependently and independently of the Sec translocase complex, as well as at least some lipoproteins. Aids folding of multispanning membrane proteins. The chain is Membrane protein insertase YidC from Alcanivorax borkumensis (strain ATCC 700651 / DSM 11573 / NCIMB 13689 / SK2).